A 315-amino-acid chain; its full sequence is Prephenate dehydratase (315 aa).

In terms of domain architecture, Prephenate dehydratase spans 3 to 189; that stretch reads RIAYLGPEGT…ARTRFVLVGP (187 aa). Residues 203–280 enclose the ACT domain; that stretch reads SVVLRIDNAP…ADVRYLGSWP (78 aa).

As to quaternary structure, homodimer.

It carries out the reaction prephenate + H(+) = 3-phenylpyruvate + CO2 + H2O. It functions in the pathway amino-acid biosynthesis; L-phenylalanine biosynthesis; phenylpyruvate from prephenate: step 1/1. This is Prephenate dehydratase (pheA) from Mycobacterium avium (strain 104).